A 340-amino-acid chain; its full sequence is MDSAAPALSPALTAHTGHSATADLAIQIPKCPDPERYFYTSQCPDINHLRSLSILNRWLETELVFVGDEEDVSKLSEGELSFYRFLFAFLSAADDLVTENLGGLSGLFEQKDILHYYVEQECIEVAHSRVYNIIQLVLFHNNDQARREYVAGTINHPAIRAKVDWLEARVRECASVPEKFILMILIEGIFFAASFAAIAYLRTNNLLRVTCQSNDLISRDEAVHTTASCYIYNNYLGGHAKPPPDRVYGLFRQAVEIEIGFIRSQAPTDSHILSPAALAAIENYVRFSADRLLGLIHMKPLFSAPPPDASFPLSLMSTDKHTNFFECRSTSYAGAVVNDL.

Residues aspartate 94, glutamate 124, and histidine 127 each contribute to the Fe cation site. Tyrosine 131 is an active-site residue. A helical membrane pass occupies residues phenylalanine 180 to tyrosine 200. Positions 187, 221, and 224 each coordinate Fe cation.

Belongs to the ribonucleoside diphosphate reductase small chain family. As to quaternary structure, heterotetramer composed of a homodimer of the large subunit (R1) and a homodimer of the small subunit (R2). Larger multisubunit protein complex are also active, composed of (R1)n(R2)n. The cofactor is Fe cation.

Its subcellular location is the host membrane. It carries out the reaction a 2'-deoxyribonucleoside 5'-diphosphate + [thioredoxin]-disulfide + H2O = a ribonucleoside 5'-diphosphate + [thioredoxin]-dithiol. Functionally, ribonucleoside-diphosphate reductase holoenzyme provides the precursors necessary for viral DNA synthesis. Allows virus growth in non-dividing cells, as well as reactivation from latency in infected hosts. Catalyzes the biosynthesis of deoxyribonucleotides from the corresponding ribonucleotides. The chain is Ribonucleoside-diphosphate reductase small subunit from Human herpesvirus 1 (strain KOS) (HHV-1).